Here is a 428-residue protein sequence, read N- to C-terminus: Adenylosuccinate synthetase (428 aa).

Residues 12–18 (GDEGKGK) and 40–42 (GHS) contribute to the GTP site. Asp13 (proton acceptor) is an active-site residue. 2 residues coordinate Mg(2+): Asp13 and Gly40. Residues 13–16 (DEGK), 38–41 (NAGH), Thr128, Arg142, Gln223, Thr238, and Arg302 each bind IMP. Residue His41 is the Proton donor of the active site. Substrate is bound at residue 298–304 (VTTGRPR). Residues Arg304, 330-332 (KLD), and 412-414 (GTG) contribute to the GTP site.

Belongs to the adenylosuccinate synthetase family. Homodimer. It depends on Mg(2+) as a cofactor.

It is found in the cytoplasm. It carries out the reaction IMP + L-aspartate + GTP = N(6)-(1,2-dicarboxyethyl)-AMP + GDP + phosphate + 2 H(+). The protein operates within purine metabolism; AMP biosynthesis via de novo pathway; AMP from IMP: step 1/2. Its function is as follows. Plays an important role in the de novo pathway of purine nucleotide biosynthesis. Catalyzes the first committed step in the biosynthesis of AMP from IMP. In Bifidobacterium longum (strain DJO10A), this protein is Adenylosuccinate synthetase.